A 344-amino-acid polypeptide reads, in one-letter code: Uroporphyrinogen decarboxylase (344 aa).

Substrate contacts are provided by residues 23–27 (RQAGR), Asp-73, Tyr-149, Thr-204, and His-321.

It belongs to the uroporphyrinogen decarboxylase family. As to quaternary structure, homodimer.

It localises to the cytoplasm. It carries out the reaction uroporphyrinogen III + 4 H(+) = coproporphyrinogen III + 4 CO2. It participates in porphyrin-containing compound metabolism; protoporphyrin-IX biosynthesis; coproporphyrinogen-III from 5-aminolevulinate: step 4/4. Functionally, catalyzes the decarboxylation of four acetate groups of uroporphyrinogen-III to yield coproporphyrinogen-III. This is Uroporphyrinogen decarboxylase from Francisella tularensis subsp. novicida (strain U112).